The following is a 182-amino-acid chain: Peptidoglycan recognition protein 1 (182 aa).

Positions 1 to 18 (MLFACALLALLGLATSCS) are cleaved as a signal peptide. 3 disulfides stabilise this stretch: Cys17-Cys141, Cys33-Cys78, and Cys54-Cys60. Positions 39–167 (HPVRYVVISH…RDVQSTLSPG (129 aa)) constitute an N-acetylmuramoyl-L-alanine amidase domain.

Belongs to the N-acetylmuramoyl-L-alanine amidase 2 family. Homodimer; disulfide-linked. Interacts with HSPA1A; this interaction forms a cytotoxic complex that is released by lymphokine-activated killer cells. Interacts with HSPBP1; this interaction blocks the cytotoxic activity of the PGLYRP1-HSPA1A complex. Strongly expressed in spleen and lung. Also detected in brain and thymus. In the lung, expressed in the intraalveolar space, in the brain, expressed in the Purkinje cells of the cerebellum and in certain layers of neurons in the hippocampus. Also detected in cells filling the space within the intestinal villus.

It localises to the cytoplasm. The protein localises to the secreted. In terms of biological role, innate immunity protein that plays several important functions in antimicrobial and antitumor defense systems. Acts as a pattern receptor that binds to murein peptidoglycans (PGN) of Gram-positive bacteria and thus provides bactericidal activity. Forms an equimolar complex with heat shock protein HSPA1A and induces programmed cell death through apoptosis and necroptosis in tumor cell lines by activating the TNFR1 receptor on the target cell membrane. In addition, acts in complex with the Ca(2+)-binding protein S100A4 as a chemoattractant able to induce lymphocyte movement. Mechanistically, this complex acts as a ligand of the chemotactic receptors CCR5 and CXCR3 which are present on the cells of the immune system. Also promotes the activation of lymphocytes that become able to kill virus-infected cells as well as tumor cells by modulating the spectrum of their target-cell specificity. Induction of cytotoxicity on monocyte surface requires interaction with TREM1 receptor. The polypeptide is Peptidoglycan recognition protein 1 (Pglyrp1) (Mus musculus (Mouse)).